The chain runs to 152 residues: MSEKYVVTWDMLQIHARKLASRLMPSEQWKGIIAVSRGGLVPGALLARELGIRHVDTVCISSYDHDNQRELKVLKRAEGDGEGFIVIDDLVDTGGTAVAIREMYPKAHFVTIFAKPAGRPLVDDYVIDIPQDTWIEQPWDMGVVFVPPISGR.

5-phospho-alpha-D-ribose 1-diphosphate is bound by residues 37–38 (RG), arginine 69, and 88–96 (DDLVDTGGT). Arginine 69 serves as a coordination point for GMP. Mg(2+) is bound at residue aspartate 89. The guanine site is built by aspartate 92 and isoleucine 135. Residues aspartate 92 and isoleucine 135 each coordinate xanthine. Residues 92 to 96 (DTGGT) and 134 to 135 (WI) contribute to the GMP site.

This sequence belongs to the purine/pyrimidine phosphoribosyltransferase family. XGPT subfamily. Homotetramer. The cofactor is Mg(2+).

Its subcellular location is the cell inner membrane. The catalysed reaction is GMP + diphosphate = guanine + 5-phospho-alpha-D-ribose 1-diphosphate. It catalyses the reaction XMP + diphosphate = xanthine + 5-phospho-alpha-D-ribose 1-diphosphate. It carries out the reaction IMP + diphosphate = hypoxanthine + 5-phospho-alpha-D-ribose 1-diphosphate. It functions in the pathway purine metabolism; GMP biosynthesis via salvage pathway; GMP from guanine: step 1/1. The protein operates within purine metabolism; XMP biosynthesis via salvage pathway; XMP from xanthine: step 1/1. Purine salvage pathway enzyme that catalyzes the transfer of the ribosyl-5-phosphate group from 5-phospho-alpha-D-ribose 1-diphosphate (PRPP) to the N9 position of the 6-oxopurines guanine and xanthine to form the corresponding ribonucleotides GMP (guanosine 5'-monophosphate) and XMP (xanthosine 5'-monophosphate), with the release of PPi. To a lesser extent, also acts on hypoxanthine. This chain is Xanthine-guanine phosphoribosyltransferase, found in Citrobacter koseri (strain ATCC BAA-895 / CDC 4225-83 / SGSC4696).